The chain runs to 454 residues: Bifunctional protein GlmU (454 aa).

The segment at 1-225 (MNIVILAAGM…LWETLGVNSK (225 aa)) is pyrophosphorylase. Residues 6–9 (LAAG), Lys-20, Gln-71, 76–77 (GT), 98–100 (YGD), Gly-135, Glu-150, Asn-165, and Asn-223 contribute to the UDP-N-acetyl-alpha-D-glucosamine site. Asp-100 is a binding site for Mg(2+). Asn-223 lines the Mg(2+) pocket. The interval 226 to 246 (VQLAEIERIHQRNIAQRLLEA) is linker. The N-acetyltransferase stretch occupies residues 247–454 (GVTLLDPARI…WQRPVKQPKK (208 aa)). Positions 329 and 347 each coordinate UDP-N-acetyl-alpha-D-glucosamine. His-359 acts as the Proton acceptor in catalysis. 2 residues coordinate UDP-N-acetyl-alpha-D-glucosamine: Tyr-362 and Asn-373. Acetyl-CoA is bound by residues Ala-376, 382–383 (NY), Ser-401, Ala-419, and Arg-436.

In the N-terminal section; belongs to the N-acetylglucosamine-1-phosphate uridyltransferase family. The protein in the C-terminal section; belongs to the transferase hexapeptide repeat family. In terms of assembly, homotrimer. The cofactor is Mg(2+).

Its subcellular location is the cytoplasm. The enzyme catalyses alpha-D-glucosamine 1-phosphate + acetyl-CoA = N-acetyl-alpha-D-glucosamine 1-phosphate + CoA + H(+). It carries out the reaction N-acetyl-alpha-D-glucosamine 1-phosphate + UTP + H(+) = UDP-N-acetyl-alpha-D-glucosamine + diphosphate. It functions in the pathway nucleotide-sugar biosynthesis; UDP-N-acetyl-alpha-D-glucosamine biosynthesis; N-acetyl-alpha-D-glucosamine 1-phosphate from alpha-D-glucosamine 6-phosphate (route II): step 2/2. The protein operates within nucleotide-sugar biosynthesis; UDP-N-acetyl-alpha-D-glucosamine biosynthesis; UDP-N-acetyl-alpha-D-glucosamine from N-acetyl-alpha-D-glucosamine 1-phosphate: step 1/1. It participates in bacterial outer membrane biogenesis; LPS lipid A biosynthesis. Catalyzes the last two sequential reactions in the de novo biosynthetic pathway for UDP-N-acetylglucosamine (UDP-GlcNAc). The C-terminal domain catalyzes the transfer of acetyl group from acetyl coenzyme A to glucosamine-1-phosphate (GlcN-1-P) to produce N-acetylglucosamine-1-phosphate (GlcNAc-1-P), which is converted into UDP-GlcNAc by the transfer of uridine 5-monophosphate (from uridine 5-triphosphate), a reaction catalyzed by the N-terminal domain. The protein is Bifunctional protein GlmU of Cupriavidus metallidurans (strain ATCC 43123 / DSM 2839 / NBRC 102507 / CH34) (Ralstonia metallidurans).